We begin with the raw amino-acid sequence, 78 residues long: Translation initiation factor IF-1 (78 aa).

The S1-like domain occupies 2–78 (SKNNLNETES…TRARITYRFK (77 aa)).

It belongs to the IF-1 family. Component of the 30S ribosomal translation pre-initiation complex which assembles on the 30S ribosome in the order IF-2 and IF-3, IF-1 and N-formylmethionyl-tRNA(fMet); mRNA recruitment can occur at any time during PIC assembly.

The protein localises to the cytoplasm. Functionally, one of the essential components for the initiation of protein synthesis. Stabilizes the binding of IF-2 and IF-3 on the 30S subunit to which N-formylmethionyl-tRNA(fMet) subsequently binds. Helps modulate mRNA selection, yielding the 30S pre-initiation complex (PIC). Upon addition of the 50S ribosomal subunit IF-1, IF-2 and IF-3 are released leaving the mature 70S translation initiation complex. This Onion yellows phytoplasma (strain OY-M) protein is Translation initiation factor IF-1.